A 682-amino-acid chain; its full sequence is MELITELFDEDTTLPITNLYPKKKIPQIFSVHVDDAIEQPGFRLCTYTSGGDTNRDLKMGDKMMHIVPFTLTAKGSIAKLKGLGPSPINYINSVFTVAMQTMRQYKIDACMLRILKSKTAGQARQIQVIADRLIRSRSGGRYVLLKELWDYDKKYAYILIHRKNVSLEDIPGVPEISTELFTKVESKVGDVYINKDTGAQVTKNEAIAASIAQENDKRSDQAVIVKVKISRRAIAQSQSLESSRFETPMFQKFEASAAELNKPADAPLISDSNELTVISTSGFALENALSSVTAGMAFREASIIPEDKESIINAEIKNKALERLRKESITSIKTLETIASIVDDTLEKYKGAWFERNINKHSHLNQDAANELVQNSWNAIKTKIIRRELRGYALTAGWSLHPIVENKDSSKYTPAQKRGIREYVGSGYVDINNALLGLYNPDERTSILTASDIEKAIDNLDSAFKNGERLPKGITLYRSQRMLPSIYEAMVKNRVFYFRNFVSTSLYPNIFGTWMTDSSIGVLPDEKRLSVSIDKTDEGLVNSSDNLVGIGWVITGADKVNVVLPGGSLAPSNEMEVILPRGLMVKVNKITDASYNDGTVKTNNKLIQAEVMTTEELTESVIYDGDHLMETGELVTMTGDIEDRVDFASFVSSNVKQKVESSLGIIASCIDIANMPYKFVQG.

The TR mART core domain occupies 383 to 614; it reads KIIRRELRGY…KLIQAEVMTT (232 aa). Residues Arg478, Ser503, and Glu576 contribute to the active site.

This sequence belongs to the Tevenvirinae NAD(+)--arginine ADP-ribosyltransferase family. Post-translationally, proteolytic cleavages at the N- and C-termini by the prohead core protein protease give rise to the mature enzyme.

The protein localises to the virion. It catalyses the reaction L-arginyl-[protein] + NAD(+) = N(omega)-(ADP-D-ribosyl)-L-arginyl-[protein] + nicotinamide + H(+). Its function is as follows. ADP-ribosyltransferase that efficiently ADP-ribosylates one of the two alpha subunits of host RNA polymerase RPOA on an arginine located in the C-terminal region. ADP-ribosylation of RPOA alpha subunit enhances the transcription of viral early genes. Also ribosylates RPOA subunits beta, beta' and sigma 70 and performs an autoribosylation reaction. Additional in-vitro identified targets include proteins involved in either translation or cellular metabolism such as elongation factor-Tu or GroeL. Mono-ADP-ribosylates host MAZF which may inactivate the latter. The sequence is that of NAD(+)--arginine ADP-ribosyltransferase (alt) from Escherichia coli (Bacteriophage T4).